Consider the following 299-residue polypeptide: Phosphatidylserine decarboxylase proenzyme (299 aa).

Active-site charge relay system; for autoendoproteolytic cleavage activity residues include Asp-115, His-171, and Ser-258. Ser-258 functions as the Schiff-base intermediate with substrate; via pyruvic acid; for decarboxylase activity in the catalytic mechanism. Pyruvic acid (Ser); by autocatalysis is present on Ser-258.

Belongs to the phosphatidylserine decarboxylase family. PSD-B subfamily. Prokaryotic type II sub-subfamily. As to quaternary structure, heterodimer of a large membrane-associated beta subunit and a small pyruvoyl-containing alpha subunit. It depends on pyruvate as a cofactor. Is synthesized initially as an inactive proenzyme. Formation of the active enzyme involves a self-maturation process in which the active site pyruvoyl group is generated from an internal serine residue via an autocatalytic post-translational modification. Two non-identical subunits are generated from the proenzyme in this reaction, and the pyruvate is formed at the N-terminus of the alpha chain, which is derived from the carboxyl end of the proenzyme. The autoendoproteolytic cleavage occurs by a canonical serine protease mechanism, in which the side chain hydroxyl group of the serine supplies its oxygen atom to form the C-terminus of the beta chain, while the remainder of the serine residue undergoes an oxidative deamination to produce ammonia and the pyruvoyl prosthetic group on the alpha chain. During this reaction, the Ser that is part of the protease active site of the proenzyme becomes the pyruvoyl prosthetic group, which constitutes an essential element of the active site of the mature decarboxylase.

It is found in the cell membrane. It carries out the reaction a 1,2-diacyl-sn-glycero-3-phospho-L-serine + H(+) = a 1,2-diacyl-sn-glycero-3-phosphoethanolamine + CO2. The protein operates within phospholipid metabolism; phosphatidylethanolamine biosynthesis; phosphatidylethanolamine from CDP-diacylglycerol: step 2/2. Catalyzes the formation of phosphatidylethanolamine (PtdEtn) from phosphatidylserine (PtdSer). The protein is Phosphatidylserine decarboxylase proenzyme of Chlamydia felis (strain Fe/C-56) (Chlamydophila felis).